The chain runs to 591 residues: V-type ATP synthase alpha chain (591 aa).

242-249 lines the ATP pocket; sequence GPFGAGKT.

Belongs to the ATPase alpha/beta chains family.

It carries out the reaction ATP + H2O + 4 H(+)(in) = ADP + phosphate + 5 H(+)(out). Produces ATP from ADP in the presence of a proton gradient across the membrane. The V-type alpha chain is a catalytic subunit. The protein is V-type ATP synthase alpha chain of Chlamydia trachomatis serovar A (strain ATCC VR-571B / DSM 19440 / HAR-13).